The chain runs to 953 residues: Kinesin-like protein KIF23 (953 aa).

Residues 7 to 11 (KTVRK) carry the Nuclear localization signal motif. Positions 25–436 (PVGVYCRVRP…MRFAEVTQEV (412 aa)) constitute a Kinesin motor domain. 112–119 (GVTGSGKT) is a binding site for ATP. Serine 155 and serine 160 each carry phosphoserine. Positions 542-618 (QEKLNEREKV…RRLEARLQGM (77 aa)) form a coiled coil. Residues lysine 572 and lysine 587 each participate in a glycyl lysine isopeptide (Lys-Gly) (interchain with G-Cter in SUMO2) cross-link. Phosphoserine is present on serine 606. Residues lysine 625, lysine 648, lysine 663, and lysine 666 each participate in a glycyl lysine isopeptide (Lys-Gly) (interchain with G-Cter in SUMO2) cross-link. The tract at residues 658–695 (IVTEPKPEKPERPSRERDREKIIPRSVSPSPLPLSSNN) is disordered. Residues 662 to 680 (PKPEKPERPSRERDREKII) show a composition bias toward basic and acidic residues. The segment covering 681–693 (PRSVSPSPLPLSS) has biased composition (low complexity). Serine 683 and serine 685 each carry phosphoserine. Threonine 739 carries the post-translational modification Phosphothreonine. A Phosphoserine modification is found at serine 807. Residues lysine 816 and lysine 847 each participate in a glycyl lysine isopeptide (Lys-Gly) (interchain with G-Cter in SUMO2) cross-link. A Phosphoserine modification is found at serine 860. Residues lysine 867, lysine 870, and lysine 892 each participate in a glycyl lysine isopeptide (Lys-Gly) (interchain with G-Cter in SUMO2) cross-link. 2 disordered regions span residues 894-921 (ELPT…EWTD) and 934-953 (AGSQ…RKKP). A Phosphoserine modification is found at serine 904. Phosphothreonine is present on threonine 920. Residue lysine 949 forms a Glycyl lysine isopeptide (Lys-Gly) (interchain with G-Cter in SUMO2) linkage.

It belongs to the TRAFAC class myosin-kinesin ATPase superfamily. Kinesin family. In terms of assembly, heterotetramer of two molecules each of RACGAP1 and KIF23. Found in the centralspindlin complex. Interacts with RACGAP1; the interaction is direct. Interacts with ECT2 and PRC1. Interacts with ANXA11 during cytokinesis. Interacts with BIRC6/bruce and USP8/UBPY. Interacts with ARF6, forming heterodimers and heterotetramers. Ubiquitinated. Deubiquitinated by USP8/UBPY. In terms of tissue distribution, detected in testis and ovary from newborn mice (at protein level). Detected in brain, spinal cord and small intestine.

The protein localises to the nucleus. It is found in the cytoplasm. Its subcellular location is the cytoskeleton. It localises to the spindle. The protein resides in the midbody. The protein localises to the midbody ring. Component of the centralspindlin complex that serves as a microtubule-dependent and Rho-mediated signaling required for the myosin contractile ring formation during the cell cycle cytokinesis. Essential for cytokinesis in Rho-mediated signaling. Required for the localization of ECT2 to the central spindle. Plus-end-directed motor enzyme that moves antiparallel microtubules in vitro. The sequence is that of Kinesin-like protein KIF23 (Kif23) from Mus musculus (Mouse).